The following is a 592-amino-acid chain: Arginine--tRNA ligase (592 aa).

The 'HIGH' region motif lies at 112–122 (VNPNKELHVGH).

Belongs to the class-I aminoacyl-tRNA synthetase family. In terms of assembly, monomer.

It localises to the cytoplasm. It catalyses the reaction tRNA(Arg) + L-arginine + ATP = L-arginyl-tRNA(Arg) + AMP + diphosphate. In Thermus thermophilus (strain ATCC BAA-163 / DSM 7039 / HB27), this protein is Arginine--tRNA ligase.